We begin with the raw amino-acid sequence, 713 residues long: Protein argonaute (713 aa).

Positions E18–V129 are N-terminal domain. A PAZ domain is found at H164–F257. Residues H213–Y218 form a binds 3'-end of gDNA region. Residues D346–Y488 are mid domain. The 274-residue stretch at C426–K699 folds into the Piwi domain. Positions 457, 479, and 483 each coordinate a divalent metal cation. Positions Q457–L460 are binds 5'-phosphorylated end of gDNA. Residues D504, E541, and D570 contribute to the active site. Mn(2+) is bound at residue D504. D570 lines the Mn(2+) pocket. Binds 5'-phosphorylated end of gDNA stretches follow at residues H625–N632 and L678–R679. D688 is an active-site residue. The Mn(2+) site is built by D688 and I713.

The protein belongs to the argonaute family. Long pAgo subfamily. A divalent metal cation serves as cofactor.

With respect to regulation, DNA cleavage is inhibited by EDTA. In terms of biological role, a DNA-guided ssDNA endonuclease that may play a role in defense against invading genetic elements. Uses short ssDNA sequences as guides (gDNA) to bind complementary target strands, resulting in slicing of the target DNA (tDNA). Endonucleolytically cleaves tDNA (the gDNA indicates where to cleave); two major and two minor products are seen which correspond to cleavage sites between nucleotides 9/10, 10/11, 13/14, and 14/15 downstream of the target residue base-paired with the 5'-end of the gDNA. Efficient guide-dependent tDNA cleavage requires a minimal length of 15 bp and is maximal at 19 bp. Prefers gDNA with 5'-phosphorylated purines and 3'-pyrimidines; changing these bases alters the cleavage activity and patterns. Also has guide-independent activity on tDNA called 'chopping'. Probably a first round of guide-independent activity on an invading plasmid or virus would generate guide DNAs for subsequent, more efficient, guide-dependent degradation of invading nucleic acids. Has no activity on substrate with a mismatch at positions 10 and 11, on ssDNA or RNA, nor on DNA:RNA hybrids. Digests longer (750 bp) dsDNA as well as circular plasmid and naked genomic DNA, but not chromatin, in a guide DNA-independent manner. Addition of endogenous histone A3 protects DNA from cleavage, while cleavage is insensitive to methylation. When plasmid encoding active or mutated protein (Ala-541) is transformed into Sulfolobus acidocaldarius about 25-fold fewer transformants are found with active protein; reduced levels of plasmid are found in wild-type transformed cells. While S.acidocaldarius grows at a similar temperature to M.jannaschii (70 to 80 degrees Celsius) it has very different histone-like proteins, which presumably do not protect against MjAgo. Binds ssDNA, dsDNA and DNA-RNA hybrids; binding is most efficient with dsDNA. The sequence is that of Protein argonaute from Methanocaldococcus jannaschii (strain ATCC 43067 / DSM 2661 / JAL-1 / JCM 10045 / NBRC 100440) (Methanococcus jannaschii).